The sequence spans 503 residues: Aromatase (503 aa).

A run of 2 helical transmembrane segments spans residues 19 to 39 and 51 to 71; these read EVMP…FFVW and GYCM…MGLG. Residues 294–324 are substrate-binding pocket; the sequence is ENVNQCILEMMIAAPDTLSVTVFFMLCLIAQ. Substrate is bound by residues D309 and M374. C437 lines the heme pocket.

This sequence belongs to the cytochrome P450 family. Requires heme as cofactor. In terms of tissue distribution, expressed in placenta. Highly expressed in follicles (0 hour:hCG), followed by a drop (12-24 hour:hCG) and by an increase (30-39 hour:hCG). Highly expressed in corpora lutea. Also expressed in granulosa cell layer. Not expressed in theca interna.

It localises to the endoplasmic reticulum membrane. Its subcellular location is the microsome membrane. It carries out the reaction testosterone + 3 reduced [NADPH--hemoprotein reductase] + 3 O2 = 17beta-estradiol + formate + 3 oxidized [NADPH--hemoprotein reductase] + 4 H2O + 4 H(+). It catalyses the reaction androst-4-ene-3,17-dione + 3 reduced [NADPH--hemoprotein reductase] + 3 O2 = estrone + formate + 3 oxidized [NADPH--hemoprotein reductase] + 4 H2O + 4 H(+). The catalysed reaction is androst-4-ene-3,17-dione + reduced [NADPH--hemoprotein reductase] + O2 = 19-hydroxyandrost-4-ene-3,17-dione + oxidized [NADPH--hemoprotein reductase] + H2O + H(+). The enzyme catalyses 19-hydroxyandrost-4-ene-3,17-dione + reduced [NADPH--hemoprotein reductase] + O2 = 19-oxo-androst-4-ene-3,17-dione + oxidized [NADPH--hemoprotein reductase] + 2 H2O + H(+). It carries out the reaction 19-oxo-androst-4-ene-3,17-dione + reduced [NADPH--hemoprotein reductase] + O2 = estrone + formate + oxidized [NADPH--hemoprotein reductase] + H2O + 2 H(+). It catalyses the reaction estrone + reduced [NADPH--hemoprotein reductase] + O2 = 2-hydroxyestrone + oxidized [NADPH--hemoprotein reductase] + H2O + H(+). The catalysed reaction is 17beta-hydroxy-5alpha-androstan-3-one + reduced [NADPH--hemoprotein reductase] + O2 = 17beta,19-dihydroxy-3-oxo-5alpha-androstanone + oxidized [NADPH--hemoprotein reductase] + H2O + H(+). The enzyme catalyses 17beta,19-dihydroxy-3-oxo-5alpha-androstanone + reduced [NADPH--hemoprotein reductase] + O2 = 17beta-hydroxy-3,19-dioxo-5alpha-androstanone + oxidized [NADPH--hemoprotein reductase] + 2 H2O + H(+). It carries out the reaction 17beta-hydroxy-3,19-dioxo-5alpha-androstanone + reduced [NADPH--hemoprotein reductase] + O2 = 17beta-hydroxy-3-oxo-19-nor-5alpha-androst-1-ene + formate + oxidized [NADPH--hemoprotein reductase] + H2O + 2 H(+). Its pathway is steroid hormone biosynthesis. Its function is as follows. A cytochrome P450 monooxygenase that catalyzes the conversion of C19 androgens, androst-4-ene-3,17-dione (androstenedione) and testosterone to the C18 estrogens, estrone and estradiol, respectively. Catalyzes three successive oxidations of C19 androgens: two conventional oxidations at C19 yielding 19-hydroxy and 19-oxo/19-aldehyde derivatives, followed by a third oxidative aromatization step that involves C1-beta hydrogen abstraction combined with cleavage of the C10-C19 bond to yield a phenolic A ring and formic acid. Alternatively, the third oxidative reaction yields a 19-norsteroid and formic acid. Converts dihydrotestosterone to delta1,10-dehydro 19-nordihydrotestosterone and may play a role in homeostasis of this potent androgen. Also displays 2-hydroxylase activity toward estrone. Mechanistically, uses molecular oxygen inserting one oxygen atom into a substrate, and reducing the second into a water molecule, with two electrons provided by NADPH via cytochrome P450 reductase (CPR; NADPH-ferrihemoprotein reductase). The chain is Aromatase (CYP19A1) from Equus caballus (Horse).